The chain runs to 95 residues: Aspartyl/glutamyl-tRNA(Asn/Gln) amidotransferase subunit C (95 aa).

Belongs to the GatC family. Heterotrimer of A, B and C subunits.

It catalyses the reaction L-glutamyl-tRNA(Gln) + L-glutamine + ATP + H2O = L-glutaminyl-tRNA(Gln) + L-glutamate + ADP + phosphate + H(+). The enzyme catalyses L-aspartyl-tRNA(Asn) + L-glutamine + ATP + H2O = L-asparaginyl-tRNA(Asn) + L-glutamate + ADP + phosphate + 2 H(+). Allows the formation of correctly charged Asn-tRNA(Asn) or Gln-tRNA(Gln) through the transamidation of misacylated Asp-tRNA(Asn) or Glu-tRNA(Gln) in organisms which lack either or both of asparaginyl-tRNA or glutaminyl-tRNA synthetases. The reaction takes place in the presence of glutamine and ATP through an activated phospho-Asp-tRNA(Asn) or phospho-Glu-tRNA(Gln). The sequence is that of Aspartyl/glutamyl-tRNA(Asn/Gln) amidotransferase subunit C from Caldanaerobacter subterraneus subsp. tengcongensis (strain DSM 15242 / JCM 11007 / NBRC 100824 / MB4) (Thermoanaerobacter tengcongensis).